Consider the following 208-residue polypeptide: Large ribosomal subunit protein uL3 (208 aa).

Positions 117-149 (FQGVIKRHGQSRGPMAHGSRYHRRPGSMGPVSP) are disordered.

This sequence belongs to the universal ribosomal protein uL3 family. In terms of assembly, part of the 50S ribosomal subunit. Forms a cluster with proteins L14 and L19.

One of the primary rRNA binding proteins, it binds directly near the 3'-end of the 23S rRNA, where it nucleates assembly of the 50S subunit. This is Large ribosomal subunit protein uL3 from Streptococcus equi subsp. equi (strain 4047).